The primary structure comprises 334 residues: L-lactate dehydrogenase C chain (334 aa).

NAD(+) contacts are provided by residues Gly-30–Lys-58 and Arg-100. Residues Arg-107, Asn-139, and Arg-170 each contribute to the substrate site. Residue Asn-139 participates in NAD(+) binding. The active-site Proton acceptor is His-194. Position 249 (Thr-249) interacts with substrate.

This sequence belongs to the LDH/MDH superfamily. LDH family. Homotetramer. In terms of tissue distribution, eye and liver.

Its subcellular location is the cytoplasm. It catalyses the reaction (S)-lactate + NAD(+) = pyruvate + NADH + H(+). Its pathway is fermentation; pyruvate fermentation to lactate; (S)-lactate from pyruvate: step 1/1. The protein is L-lactate dehydrogenase C chain (ldhc) of Fundulus heteroclitus (Killifish).